The sequence spans 414 residues: Riboflavin biosynthesis protein RibBA (414 aa).

Residues 1 to 204 (MTRFDTIERA…IADMIAWRRK (204 aa)) are DHBP synthase. D-ribulose 5-phosphate contacts are provided by residues 28 to 29 (RE), Asp-33, 141 to 145 (RPGHT), and Glu-165. Residue Glu-29 coordinates Mg(2+). His-144 serves as a coordination point for Mg(2+). Residues 205 to 414 (HEKQVVRVAE…DDLDLGETAQ (210 aa)) are GTP cyclohydrolase II. A GTP-binding site is contributed by 255–259 (RVHSE). Zn(2+) is bound by residues Cys-260, Cys-271, and Cys-273. GTP-binding positions include Gln-276, 299–301 (EGR), and Thr-321. The Proton acceptor; for GTP cyclohydrolase activity role is filled by Asp-333. Catalysis depends on Arg-335, which acts as the Nucleophile; for GTP cyclohydrolase activity. Residues Thr-356 and Lys-361 each contribute to the GTP site.

This sequence in the N-terminal section; belongs to the DHBP synthase family. In the C-terminal section; belongs to the GTP cyclohydrolase II family. It depends on Mg(2+) as a cofactor. The cofactor is Mn(2+). Zn(2+) serves as cofactor.

It catalyses the reaction D-ribulose 5-phosphate = (2S)-2-hydroxy-3-oxobutyl phosphate + formate + H(+). The catalysed reaction is GTP + 4 H2O = 2,5-diamino-6-hydroxy-4-(5-phosphoribosylamino)-pyrimidine + formate + 2 phosphate + 3 H(+). It participates in cofactor biosynthesis; riboflavin biosynthesis; 2-hydroxy-3-oxobutyl phosphate from D-ribulose 5-phosphate: step 1/1. It functions in the pathway cofactor biosynthesis; riboflavin biosynthesis; 5-amino-6-(D-ribitylamino)uracil from GTP: step 1/4. Catalyzes the conversion of D-ribulose 5-phosphate to formate and 3,4-dihydroxy-2-butanone 4-phosphate. In terms of biological role, catalyzes the conversion of GTP to 2,5-diamino-6-ribosylamino-4(3H)-pyrimidinone 5'-phosphate (DARP), formate and pyrophosphate. This Nocardia farcinica (strain IFM 10152) protein is Riboflavin biosynthesis protein RibBA.